The following is a 359-amino-acid chain: Olfactory receptor 5T2 (359 aa).

Topologically, residues 1 to 64 (MSYSIYKSTV…GFTDNLELQT (64 aa)) are extracellular. An N-linked (GlcNAc...) asparagine glycan is attached at Asn44. A helical transmembrane segment spans residues 65 to 85 (IFFFLFLAIYLFTLMGNLGLI). Residues 86-93 (LVVIRDSQ) lie on the Cytoplasmic side of the membrane. The helical transmembrane segment at 94 to 114 (LHKPMYYFLSMLSSVDACYSS) threads the bilayer. Over 115-138 (VITPNMLVDFTTKNKVISFLGCVA) the chain is Extracellular. A helical membrane pass occupies residues 139–159 (QVFLACSFGTTECFLLAAMAY). Topologically, residues 160 to 178 (DRYVAIYNPLLYSVSMSPR) are cytoplasmic. Residues 179–199 (VYMPLINASYVAGILHATIHT) form a helical membrane-spanning segment. At 200–235 (VATFSLSFCGANEIRRVFCDIPPLLAISYSDTHTNQ) the chain is on the extracellular side. A helical transmembrane segment spans residues 236–256 (LLLFYFVGSIELVTILIVLIS). Over 257-276 (YGLILLAILKMYSAEGRRKV) the chain is Cytoplasmic. The helical transmembrane segment at 277 to 297 (FSTCGAHLTGVSIYYGTILFM) threads the bilayer. The Extracellular portion of the chain corresponds to 298 to 310 (YVRPSSSYASDHD). Residues 311–331 (MIVSIFYTIVIPLLNPVIYSL) form a helical membrane-spanning segment. Topologically, residues 332 to 359 (RNKDVKDSMKKMFGKNQVINKVYFHTKK) are cytoplasmic.

This sequence belongs to the G-protein coupled receptor 1 family.

It is found in the cell membrane. Functionally, odorant receptor. This Homo sapiens (Human) protein is Olfactory receptor 5T2 (OR5T2).